The primary structure comprises 89 residues: Exodeoxyribonuclease 7 small subunit (89 aa).

A disordered region spans residues Met-1–Glu-22.

Belongs to the XseB family. As to quaternary structure, heterooligomer composed of large and small subunits.

Its subcellular location is the cytoplasm. It carries out the reaction Exonucleolytic cleavage in either 5'- to 3'- or 3'- to 5'-direction to yield nucleoside 5'-phosphates.. In terms of biological role, bidirectionally degrades single-stranded DNA into large acid-insoluble oligonucleotides, which are then degraded further into small acid-soluble oligonucleotides. The protein is Exodeoxyribonuclease 7 small subunit of Nitrosomonas europaea (strain ATCC 19718 / CIP 103999 / KCTC 2705 / NBRC 14298).